Reading from the N-terminus, the 492-residue chain is MSDDLFSKALENPDQDLNVELPKDDVDLGLLGDGGNERKTDEPVADAERSTGLGSGSSESESDSGSDSDSDSGSSGSEDDSADQDVEGEDEGGDAIENEDEDEDPSPSGPILSKNEILEETVPELPEDYEISEKTIITPIGVLKSAFENNIIIHATMSGEKRVLKEGSIFCLEDRTLIGMLTEVFGPLQNPFYRIKLPDSKKNLFDELKVRLGEKAFIVTPDAHWIDTFELKRNKGTDASNGYDEELPEEEQEFSDDEKEALFKKMKKQQRQRKKRDNRKLANDSDNVKVKRARQPKANSLPKLVPPLGMSSNAPMQHGYKSRNARENIKRESSATSNRNGSSPVPITQHHQQQFSANNYPFPQQPNGMPYPPYSPFPQPTNFQYPPPPFGQATPAQFSNTVPYGSLPPAYNNMSPPTQQSFMPMTQSQPPLPYGVPPMNQMQNPMYIQPPPQAPPQGNGNFQQVMELHQILLQQQQQQHQYQHQHQQDPRT.

A disordered region spans residues Met-1–Ile-117. Residues Gly-35–Arg-49 are compositionally biased toward basic and acidic residues. Composition is skewed to acidic residues over residues Ser-60–Ser-70 and Ser-77–Pro-105. The interval Leu-172–Glu-230 is RNA-binding. Disordered stretches follow at residues Thr-237–His-351 and Leu-472–Thr-492. A compositionally biased stretch (acidic residues) spans Tyr-243–Lys-259. Ser-255 is subject to Phosphoserine. The segment covering Lys-264 to Asn-278 has biased composition (basic residues). Basic and acidic residues-rich tracts occupy residues Arg-279–Lys-289 and Asn-324–Ser-333. Residues Ser-334–His-351 are compositionally biased toward polar residues. Residues Leu-472–Gln-485 show a composition bias toward low complexity.

Belongs to the NAF1 family. During assembly of the complex, component of the small nucleolar ribonucleoprotein particles containing H/ACA-type snoRNAs (H/ACA snoRNPs) which contains CBF5, NAF1, NHP2 and NOP10 proteins. Interacts with SHQ1. Interacts directly with CBF5. Interacts with hyperphosphorylated C-terminal domain (CTD) of RNA polymerase II large subunit (RPB1).

It localises to the nucleus. RNA-binding protein required for the maturation of box H/ACA snoRNPs complex and ribosome biogenesis. During assembly of the H/ACA snoRNPs complex, it associates with the complex and disappears during maturation of the complex and is replaced by GAR1 to yield mature H/ACA snoRNPs complex. Acts as a competitive binder for CBF5 probably required to prevent non-cognate RNAs from being loaded during transport of the particle by inducing a non-productive conformation of CBF5. This is H/ACA ribonucleoprotein complex non-core subunit NAF1 (NAF1) from Saccharomyces cerevisiae (strain ATCC 204508 / S288c) (Baker's yeast).